A 174-amino-acid polypeptide reads, in one-letter code: MKTRLGCLSNKSDSCSDFSEFLPPAQERTTRCLKLSNDEVTRWADSFDILLSNKYGLAAFRTFLKTEFSDENIEFWLACEDYKKIKSPAKMMSKANKIYKEFIDVHAPREVNIDHRTREETKNRLLEPTPHSLNEVQAKVYSLMEKDSYPRFIRSKIYQDLLNRTQIYCQRKSV.

One can recognise an RGS domain in the interval 46-162 (SFDILLSNKY…IRSKIYQDLL (117 aa)).

It is found in the cell membrane. The protein resides in the membrane. The protein localises to the perikaryon. It localises to the cell projection. Its subcellular location is the dendrite. It is found in the nucleus. Regulates G protein-coupled receptor signaling cascades, including signaling via muscarinic acetylcholine receptors and dopamine receptors. Inhibits signal transduction by increasing the GTPase activity of G protein alpha subunits, thereby driving them into their inactive GDP-bound form. Modulates the activity of potassium channels that are activated in response to G protein-coupled receptor signaling. This is Regulator of G-protein signaling 8 (rgs8) from Danio rerio (Zebrafish).